We begin with the raw amino-acid sequence, 376 residues long: Queuine tRNA-ribosyltransferase (376 aa).

Aspartate 90 acts as the Proton acceptor in catalysis. Substrate is bound by residues 90–94 (DSGGF), aspartate 144, glutamine 193, and glycine 220. The RNA binding stretch occupies residues 251-257 (GVGTPED). Catalysis depends on aspartate 270, which acts as the Nucleophile. The RNA binding; important for wobble base 34 recognition stretch occupies residues 275–279 (TRNAR). Cysteine 308, cysteine 310, cysteine 313, and histidine 339 together coordinate Zn(2+).

It belongs to the queuine tRNA-ribosyltransferase family. Homodimer. Within each dimer, one monomer is responsible for RNA recognition and catalysis, while the other monomer binds to the replacement base PreQ1. Zn(2+) serves as cofactor.

The catalysed reaction is 7-aminomethyl-7-carbaguanine + guanosine(34) in tRNA = 7-aminomethyl-7-carbaguanosine(34) in tRNA + guanine. Its pathway is tRNA modification; tRNA-queuosine biosynthesis. Catalyzes the base-exchange of a guanine (G) residue with the queuine precursor 7-aminomethyl-7-deazaguanine (PreQ1) at position 34 (anticodon wobble position) in tRNAs with GU(N) anticodons (tRNA-Asp, -Asn, -His and -Tyr). Catalysis occurs through a double-displacement mechanism. The nucleophile active site attacks the C1' of nucleotide 34 to detach the guanine base from the RNA, forming a covalent enzyme-RNA intermediate. The proton acceptor active site deprotonates the incoming PreQ1, allowing a nucleophilic attack on the C1' of the ribose to form the product. After dissociation, two additional enzymatic reactions on the tRNA convert PreQ1 to queuine (Q), resulting in the hypermodified nucleoside queuosine (7-(((4,5-cis-dihydroxy-2-cyclopenten-1-yl)amino)methyl)-7-deazaguanosine). The chain is Queuine tRNA-ribosyltransferase from Cupriavidus taiwanensis (strain DSM 17343 / BCRC 17206 / CCUG 44338 / CIP 107171 / LMG 19424 / R1) (Ralstonia taiwanensis (strain LMG 19424)).